A 657-amino-acid polypeptide reads, in one-letter code: Hemocyanin B chain (657 aa).

Cysteine 93 and cysteine 98 are oxidised to a cystine. The N-linked (GlcNAc...) asparagine glycan is linked to asparagine 167. Residues histidine 194, histidine 198, histidine 224, histidine 344, histidine 348, and histidine 384 each coordinate Cu cation. Intrachain disulfides connect cysteine 483–cysteine 502 and cysteine 562–cysteine 609.

Belongs to the tyrosinase family. Hemocyanin subfamily. Hexamer of a number of different chains, of which A, B, and C have been identified. In terms of tissue distribution, hemolymph.

The protein localises to the secreted. Its subcellular location is the extracellular space. Functionally, hemocyanins are copper-containing oxygen carriers occurring freely dissolved in the hemolymph of many mollusks and arthropods. The protein is Hemocyanin B chain of Panulirus interruptus (California spiny lobster).